The sequence spans 341 residues: tRNA N6-adenosine threonylcarbamoyltransferase (341 aa).

2 residues coordinate Fe cation: His115 and His119. Substrate is bound by residues 138-142 (VVSGG), Asp171, Gly184, Asp188, and Asn279. Asp307 provides a ligand contact to Fe cation.

It belongs to the KAE1 / TsaD family. The cofactor is Fe(2+).

It localises to the cytoplasm. It catalyses the reaction L-threonylcarbamoyladenylate + adenosine(37) in tRNA = N(6)-L-threonylcarbamoyladenosine(37) in tRNA + AMP + H(+). Required for the formation of a threonylcarbamoyl group on adenosine at position 37 (t(6)A37) in tRNAs that read codons beginning with adenine. Is involved in the transfer of the threonylcarbamoyl moiety of threonylcarbamoyl-AMP (TC-AMP) to the N6 group of A37, together with TsaE and TsaB. TsaD likely plays a direct catalytic role in this reaction. The sequence is that of tRNA N6-adenosine threonylcarbamoyltransferase from Clostridium kluyveri (strain NBRC 12016).